The primary structure comprises 366 residues: 5-hydroxytryptamine receptor 1F (366 aa).

Topologically, residues M1–I24 are extracellular. Residues N5 and N10 are each glycosylated (N-linked (GlcNAc...) asparagine). Residues L25–I49 traverse the membrane as a helical segment. The Cytoplasmic portion of the chain corresponds to V50–N59. A helical membrane pass occupies residues Y60–I81. The Extracellular portion of the chain corresponds to V82–C96. C96 and C172 form a disulfide bridge. The helical transmembrane segment at D97–L119 threads the bilayer. Serotonin contacts are provided by D103 and C107. A DRY motif; important for ligand-induced conformation changes motif is present at residues D120–Y122. Topologically, residues D120–Q139 are cytoplasmic. The chain crosses the membrane as a helical span at residues A140–L159. Residues F160–H178 lie on the Extracellular side of the membrane. A helical membrane pass occupies residues I179 to Y202. Topologically, residues K203–A291 are cytoplasmic. The helical transmembrane segment at A292 to V315 threads the bilayer. Over V316–E327 the chain is Extracellular. Residues M328 to F350 form a helical membrane-spanning segment. The short motif at N343 to Y347 is the NPxxY motif; important for ligand-induced conformation changes and signaling element. The Cytoplasmic segment spans residues N351–Y366.

This sequence belongs to the G-protein coupled receptor 1 family.

It is found in the cell membrane. Functionally, G-protein coupled receptor for 5-hydroxytryptamine (serotonin). Also functions as a receptor for various alkaloids and psychoactive substances. Ligand binding causes a conformation change that triggers signaling via guanine nucleotide-binding proteins (G proteins) and modulates the activity of downstream effectors, such as adenylate cyclase. HTR1F is coupled to G(i)/G(o) G alpha proteins and mediates inhibitory neurotransmission by inhibiting adenylate cyclase activity. The chain is 5-hydroxytryptamine receptor 1F (HTR1F) from Cavia porcellus (Guinea pig).